The following is a 244-amino-acid chain: Cyclin-Q (244 aa).

Belongs to the cyclin family. Cyclin-like FAM58 subfamily.

Its function is as follows. May be an activating cyclin for the cyclin-associated kinase CDK10. The protein is Cyclin-Q (ccnq) of Xenopus laevis (African clawed frog).